Reading from the N-terminus, the 3898-residue chain is MELNHFELLYKTSKQKPVGVEEPVYDTAGRPLFGNPSEVHPQSTLKLPHDRGRGDIRTTLRDLPRKGDCRSGNHLGPVSGIYIKPGPVYYQDYTGPVYHRAPLEFFDEAQFCEVTKRIGRVTGSDGKLYHIYVCVDGCILLKLAKRGTPRTLKWIRNFTNCPLWVTSCSDDGASGSKDKKPDRMNKGKLKIAPREHEKDSKTKPPDATIVVEGVKYQIKKKGKVKGKNTQDGLYHNKNKPPESRKKLEKALLAWAVITILLYQPVAAENITQWNLSDNGTNGIQRAMYLRGVNRSLHGIWPEKICKGVPTHLATDTELKEIRGMMDASERTNYTCCRLQRHEWNKHGWCNWYNIDPWIQLMNRTQTNLTEGPPDKECAVTCRYDKNTDVNVVTQARNRPTTLTGCKKGKNFSFAGTVIEGPCNFNVSVEDILYGDHECGSLLQDTALYLLDGMTNTIENARQGAARVTSWLGRQLSTAGKKLERRSKTWFGAYALSPYCNVTRKIGYIWYTNNCTPACLPKNTKIIGPGKFDTNAEDGKILHEMGGHLSEFLLLSLVILSDFAPETASTLYLILHYAIPQSHEEPEGCDTNQLNLTVKLRTEDVVPSSVWNIGKYVCVRPDWWPYETKVALLFEEAGQVIKLVLRALRDLTRVWNSASTTAFLICLIKVLRGQVVQGIIWLLLVTGAQGRLACKEDYRYAISSTNEIGLLGAEGLTTTWKEYSHGLQLDDGTVKAVCTAGSFKVTALNVVSRRYLASLHKRALPTSVTFELLFDGTNPAIEEMDDDFGFGLCPFDTSPVIKGKYNTTLLNGSAFYLVCPIGWTGVVECTAVSPTTLRTEVVKTFRRDKPFPHRVDCVTTIVEKEDLFHCKLGGNWTCVKGDPVTYKGGQVKQCRWCGFEFKEPYGLPHYPIGKCILTNETGYRVVDSTDCNRDGVVISTEGEHECLIGNTTVKVHALDERLGPMPCRPKEIVSSEGPVRKTSCTFNYTKTLRNKYYEPRDSYFQQYMLKGEYQYWFNLDVTDHHTDYFAEFVVLVVVALLGGRYVLWLIVTYIILTEQLAAGLQLGQGEVVLIGNLITHTDNEVVVYFLLLYLVIRDEPIKKWILLLFHAMTNNPVKTITVALLMISGVAKGGKIDGGWQRQPVTSFDIQLALAVVVVVVMLLAKRDPTTFPLVITVATLRTAKITNGFSTDLVIATVSAALLTWTYISDYYKYKTWLQYLVSTVTGIFLIRVLKGIGELDLHAPTLPSHRPLFYILVYLISTAVVTRWNLDVAGLLLQCVPTLLMVFTMWADILTLILILPTYELTKLYYLKEVKIGAERGWLWKTNYKRVNDIYEVDQTSEGVYLFPSKQRTSAITSTMLPLIKAILISCISNKWQLIYLLYLIFEVSYYLHKKVIDEIAGGTNFVSRLVAALIEVNWAFDNEEVKGLKKFFLLSSRVKELIIKHKVRNEVVVRWFGDEEIYGMPKLIGLVKAATLSRNKHCMLCTVCEDRDWRGETCPKCGRFGPPVVCGMTLADFEEKHYKRIFIREDQSGGPLREEHAGYLQYKARGQLFLRNLPVLATKVKMLLVGNLGTEIGDLEHLGWVLRGPAVCKKVTEHERCTTSIMDKLTAFFGVMPRGTTPRAPVRFPTSLLKIRRGLETGWAYTHQGGISSVDHVTCGKDLLVCDTMGRTRVVCQSNNKMTDESEYGVKTDSGCPEGARCYVFNPEAVNISGTKGAMVHLQKTGGEFTCVTASGTPAFFDLKNLKGWSGLPIFEASSGRVVGRVKVGKNEDSKPTKLMSGIQTVSKSATDLTEMVKKITTMNRGEFRQITLATGAGKTTELPRSVIEEIGRHKRVLVLIPLRAAAESVYQYMRQKHPSIAFNLRIGEMKEGDMATGITYASYGYFCQMSQPKLRAAMVEYSFIFLDEYHCATPEQLAIMGKIHRFSENLRVVAMTATPAGTVTTTGQKHPIEEFIAPEVMKGEDLGSEYLDIAGLKIPVEEMKNNMLVFVPTRNMAVEAAKKLKAKGYNSGYYYSGEDPSNLRVVTSQSPYVVVATNAIESGVTLPDLDVVVDTGLKCEKRIRLSPKMPFIVTGLKRMAVTIGEQAQRRGRVGRVKPGRYYRSQETPVGSKDYHYDLLQAQRYGIEDGINITKSFREMNYDWSLYEEDSLMITQLEILNNLLISEELPMAVKNIMARTDHPEPIQLAYNSYETQVPVLFPKIRNGEVTDTYDNYTFLNARKLGDDVPPYVYATEDEDLAVELLGLDWPDPGNQGTVEAGRALKQVVGLSTAENALLVALFGYVGYQALSKRHIPVVTDIYSVEDHRLEDTTHLQYAPNAIKTEGKETELKELAQGDVQRCVEAVTNYAREGIQFMKSQALKVRETPTYKETMNTVADYVKKFIEALTDSKEDIIKYGLWGAHTALYKSIGARLGHETAFATLVVKWLAFGGESISDHIKQAATDLVVYYIINRPQFPGDTETQQEGRKFVASLLVSALATYTYKSWNYNNLSKIVEPALATLPYAAKALKLFAPTRLESVVILSTAIYKTYLSIRRGKSDGLLGTGVSAAMEIMSQNPVSVGIAVMLGVGAVAAHNAIEASEQKRTLLMKVFVKNFLDQAATDELVKESPEKIIMALFEAVQTVGNPLRLVYHLYGVFYKGWEAKELAQRTAGRNLFTLIMFEAVELLGVDSEGKIRQLSSNYILELLYKFRDNIKSSVREIAISWAPAPFSCDWTPTDDRIGLPHENYLRVETKCPCGYRMKAVKNCAGELRLLEEGGSFLCRNKFGRGSQNYRVTKYYDDNLSEIKPVIRMEGHVELYYKGATIKLDFNNSKTVLATDKWEVDHSTLVRALKRYTGAGYRGAYLGEKPNHKHLIQRDCATITKDKVCFIKMKRGCAFTYDLSLHNLTRLIELVHKNNLEDREIPAVTVTTWLAYTFVNEDIGTIKPTFGEKVTPEKQEEVVLQPAVVVDTTDVAVTVVGETSTMTTGETPTTFTSLGSDSKVRQVLKLGVDDGQYPGPNQQRASLLEAIQGVDERPSVLILGSDKATSNRVKTAKNVKIYRSRDPLELREMMKRGKILVVALSRVDTALLKFVDYKGTFLTRETLEALSLGKPKKRDITKAEAQWLLRLEDQIEELPDWFAAKEPIFLEANIKRDKYHLVGDIATIKEKAKQLGATDSTKISKEVGAKVYSMKLSNWVIQEENKQGSLAPLFEELLQQCPPGGQNKTTHMVSAYQLAQGNWVPVSCHVFMGTIPARRTKTHPYEAYVKLRELVDEHKMKALCGGSGLSKHNEWVIGKVKYQGNLRTKHMLNPGKVAEQLHREGYRHNVYNKTIGSVMTATGIRLEKLPVVRAQTDTTNFHQAIRDKIDKEENLQTPGLHKKLMEVFNALKRPELEASYDAVDWEELERGINRKGAAGFFERKNIGEVLDSEKNKVEEVIDSLKKGRNIRYYETAIPKNEKRDVNDDWTAGDFVDEKKPRVIQYPEAKTRLAITKVMYKWVKQKPVVIPGYEGKTPLFQIFDKVKKEWDQFQNPVAVSFDTKAWDTQVTTRDLELIRDIQKFYFKKKWHKFIDTLTKHMSEVPVISADGEVYIRKGQRGSGQPDTSAGNSMLNVLTMVYAFCEATGVPYKSFDRVAKIHVCGDDGFLITERALGEKFASKGVQILYEAGKPQKITEGDKMKVAYQFDDIEFCSHTPVQVRWSDNTSSYMPGRNTTTILAKMATRLDSSGERGTIAYEKAVAFSFLLMYSWNPLIRRICLLVLSTELQVRPGKSTTYYYEGDPISAYKEVIGHNLFDLKRTSFEKLAKLNLSMSTLGVWTRHTSKRLLQDCVNVGTKEGNWLVNADRLVSSKTGNRYIPGEGHTLQGKHYEELILARKPIGNFEGTDRYNLGPIVNVVLRRLKIMMMALIGRGV.

One can recognise a Peptidase C53 domain in the interval 1-168; the sequence is MELNHFELLY…TNCPLWVTSC (168 aa). Catalysis depends on for N-terminal protease activity residues Glu22, His49, and Cys69. A disordered region spans residues 32–54; sequence LFGNPSEVHPQSTLKLPHDRGRG. The zinc-binding TRASH domain stretch occupies residues 112-138; it reads CEVTKRIGRVTGSDGKLYHIYVCVDGC. Asn157 carries N-linked (GlcNAc...) asparagine; by host glycosylation. Disordered regions lie at residues 170 to 206 and 221 to 242; these read DDGA…KPPD and KGKV…KPPE. Basic and acidic residues-rich tracts occupy residues 176 to 185 and 192 to 204; these read SKDKKPDRMN and APRE…KTKP. Asn269, Asn274, Asn278, Asn293, and Asn332 each carry an N-linked (GlcNAc...) asparagine; by host glycan. 2 disulfide bridges follow: Cys305/Cys349 and Cys335/Cys336. Asn362 and Asn367 each carry an N-linked (GlcNAc...) asparagine; by host glycan. 2 cysteine pairs are disulfide-bonded: Cys377-Cys422 and Cys381-Cys405. N-linked (GlcNAc...) asparagine; by host glycans are attached at residues Asn410, Asn425, Asn500, and Asn594. The cysteines at positions 693 and 737 are disulfide-linked. Residues Asn805, Asn810, Asn874, Asn918, Asn949, and Asn986 are each glycosylated (N-linked (GlcNAc...) asparagine; by host). A run of 9 helical transmembrane segments spans residues 1031-1051, 1070-1090, 1104-1124, 1140-1164, 1189-1209, 1217-1237, 1247-1267, 1281-1301, and 1360-1380; these read FVVL…LIVT, VVLI…YFLL, ILLL…VALL, QRQP…MLLA, FSTD…TYIS, WLQY…LKGI, LPSH…AVVT, VPTL…ILIL, and TMLP…WQLI. Residues 1441–1589 form the Peptidase C74 domain; that stretch reads KELIIKHKVR…DLEHLGWVLR (149 aa). Residues His1447, Glu1461, and Cys1512 each act as for cysteine protease NS2 activity in the active site. The helical transmembrane segment at 1568 to 1588 threads the bilayer; it reads MLLVGNLGTEIGDLEHLGWVL. Residues 1590-1763 form the Peptidase S31 domain; it reads GPAVCKKVTE…LPIFEASSGR (174 aa). Active-site charge relay system; for serine protease NS3 activity residues include His1658 and Asp1695. N-linked (GlcNAc...) asparagine; by host glycosylation occurs at Asn1713. Ser1752 serves as the catalytic Charge relay system; for serine protease NS3 activity. One can recognise a Helicase ATP-binding domain in the interval 1802-1960; it reads ITTMNRGEFR…QKHPIEEFIA (159 aa). 1815-1822 serves as a coordination point for ATP; sequence LATGAGKT. The DEAH box motif lies at 1910 to 1913; sequence DEYH. The 202-residue stretch at 1978–2179 folds into the Helicase C-terminal domain; the sequence is GLKIPVEEMK…ELPMAVKNIM (202 aa). N-linked (GlcNAc...) asparagine; by host glycans are attached at residues Asn2134, Asn2217, Asn2494, Asn2787, Asn2815, Asn2891, Asn3211, and Asn3316. The GTP site is built by Thr3500 and Leu3502. A RdRp catalytic domain is found at 3519–3642; the sequence is PVAVSFDTKA…ITERALGEKF (124 aa). Asn3689 carries N-linked (GlcNAc...) asparagine; by host glycosylation. Position 3697 (Arg3697) interacts with GTP. Residue Asn3698 is glycosylated (N-linked (GlcNAc...) asparagine; by host). Lys3705 contacts GTP. A glycan (N-linked (GlcNAc...) asparagine; by host) is linked at Asn3794.

The protein belongs to the pestivirus polyprotein family. Interacts (via N-terminus) with host SP1; this interaction induces proteasomal degradation of SP1 with subsequent down-regulation of HDAC1 and ISG15 expression thereby counteracting the host innate immunity. Interacts (via C-terminus) with host IRF3. As to quaternary structure, interacts with host OS9. In terms of assembly, homodimer; disulfide-linked. Interacts with host RPSA. Homodimer; disulfide-linked. Heterodimer with E1; disulfide-linked. As to quaternary structure, homodimer; disulfide-linked. Heterodimer with E1; disulfide-linked. Interacts with host TRX2. Interacts with host receptor ADAM17 (via metalloproteinase domain); this interaction allows binding and probably entry of the virus into the host cell. Interacts with host ANXA2; this interaction allows binding and probably entry of the virus into the host cell. Interacts with host MERTK; this interaction allows binding and probably entry of the virus into the host cell. In terms of assembly, interacts with host TRAF6; this interaction inhibits host NF-kappa-B pathway. Interacts with NS5B; this interaction enhances RNA-dependent RNA polymerase activity. Interacts with protein NS4A. Interacts with host RAB5, this interaction facilitates the formation of NS4B-related complex. Interacts with host FTH1; this interaction plays a positive role in viral anti-apoptosis. As to quaternary structure, interacts with RNA-directed RNA polymerase. Interacts with host RSAD2; this interaction inhibits viral replication. In terms of assembly, interacts with NS5A; this interaction promotes viral replication. Post-translationally, heavily glycosylated. The viral RNA of pestiviruses is expressed as a single polyprotein which undergoes post-translational proteolytic processing resulting in the production of at least eleven individual proteins. The N-terminal protease cleaves itself from the nascent polyprotein autocatalytically and thereby generates the N-terminus of the adjacent viral capsid protein C. In terms of processing, cleavage between E2 and p7 is partial.

It localises to the host cytoplasm. The protein localises to the virion. Its subcellular location is the host cell membrane. It is found in the virion membrane. The protein resides in the host cell surface. It localises to the host membrane. It carries out the reaction Leu is conserved at position P1 for all four cleavage sites. Alanine is found at position P1' of the NS4A-NS4B cleavage site, whereas serine is found at position P1' of the NS3-NS4A, NS4B-NS5A and NS5A-NS5B cleavage sites.. The enzyme catalyses RNA(n) + a ribonucleoside 5'-triphosphate = RNA(n+1) + diphosphate. The catalysed reaction is a ribonucleoside 5'-triphosphate + H2O = a ribonucleoside 5'-diphosphate + phosphate + H(+). It catalyses the reaction ATP + H2O = ADP + phosphate + H(+). Its function is as follows. Leader cysteine autoprotease that cleaves itself from the nascent polyprotein during translation of the viral mRNA. Once released, plays a role in the inhibition of host innate immune response by interacting with host IRF3 and inducing its proteasomal degradation. In terms of biological role, packages viral RNA to form a viral nucleocapsid and thereby protects viral RNA. Also plays a role in transcription regulation. Protects the incoming virus against IFN-induced effectors. Functionally, plays a role in viral entry. Interacts with host RPSA that acts as a cellular attachment receptor for the virus. Also possesses intrinsic ribonuclease (RNase) activity that can inhibit the production of type I interferon and assist in the development of persistent infections. Cleaves preferentially NpU bonds. Binds to heparan sulfate on the host cells for entry. Plays a role in cell attachment and subsequent fusion of viral and cellular membranes. Therefore, mediates together with envelope glycoprotein E2 the viral entry. Its function is as follows. Plays a role in cell attachment and subsequent fusion of viral and cellular membranes. Therefore, mediates together with envelope glycoprotein E1 the viral entry. Binds to host ADAM17 receptor for entry. Binds to host ANXA2 for entry. Binds to host MERTK for entry. In terms of biological role, plays an essential role in the virus replication cycle by acting as a viroporin. Forms ion conductive pores, which alters the cell permeability allowing the transport of ions and other small molecules. Functionally, autoprotease that associates with the host chaperone JIV and cleaves the NS2-3 protein between NS2 and NS3. Also plays a role in the formation of infectious particles. Plays a role in the regulation of viral RNA replication. Its function is as follows. Multifunctional protein that contains an N-terminal protease and a C-terminal helicase, playing essential roles in viral polyprotein processing and viral genome replication. The chymotrypsin-like serine protease activity utilizes NS4A as an essential cofactor and catalyzes the cleavage of the polyprotein leading to the release of NS4A, NS4B, NS5A, and NS5B. Plays a role in the inhibition of host NF-kappa-B activation by interacting with and inhibiting host TRAF6. Interacts with NS5B to enhance RNA-dependent RNA polymerase activity. In terms of biological role, acts as a cofactor for the NS3 protease activity. Functionally, induces a specific membrane alteration that serves as a scaffold for the virus replication complex. Antagonizes host cell apoptosis by interacting with host ferritin heavy chain. The ORF4 protein physically binds host FTH1/FHC, resulting in the reduction of FTH1 protein levels in host cells. Reduction of FTH1 concentration further inhibits the accumulation of reactive oxygen in host cells, leading to reduced apoptosis. Regulates viral RNA replication by interacting with the 3'-untranslated region of viral RNA in a dose-dependent manner. At small concentrations promotes viral synthesis by interacting with the polymerase NS5B while at large concentrations, inhibits replication. Its function is as follows. Replicates the viral (+) and (-) genome. This is Genome polyprotein from Classical swine fever virus (strain Alfort/Tuebingen) (CSFV).